A 213-amino-acid chain; its full sequence is Lactobacillus shifted protein (213 aa).

Over residues 28–38 (PRFTENAMQPN) the composition is skewed to polar residues. Disordered regions lie at residues 28–56 (PRFTENAMQPNDPTPRPAKPNVSETDATP) and 182–213 (PTSSYPLEPTGAAEEVNENQRVTEGATGYEQR).

This is Lactobacillus shifted protein (lbsA) from Emericella nidulans (strain FGSC A4 / ATCC 38163 / CBS 112.46 / NRRL 194 / M139) (Aspergillus nidulans).